Reading from the N-terminus, the 66-residue chain is Large ribosomal subunit protein bL35 (66 aa).

It belongs to the bacterial ribosomal protein bL35 family.

This Synechococcus sp. (strain RCC307) protein is Large ribosomal subunit protein bL35.